A 363-amino-acid chain; its full sequence is Peroxin-36 (363 aa).

Topologically, residues 1–193 (MSNLEKQIRL…ESFFINSFEQ (193 aa)) are cytoplasmic. Disordered stretches follow at residues 71–114 (QNHQ…DTST) and 128–157 (TNSNESQSKGRPSEYTHVNSPDSGVSSKSG). Residues 97-114 (VDSNSDSSSSETLIDTST) show a composition bias toward low complexity. Residues 194 to 213 (LIALFDNFYFLSSLIGFNTS) form a helical membrane-spanning segment. The Peroxisomal segment spans residues 214 to 232 (NSNSKITRLLRNFIKQASK). Residues 233 to 250 (IWLVIIFLTVKNLFIRMI) traverse the membrane as a helical segment. Over 251 to 363 (KLNRTEKKVK…SSDDIIDEYA (113 aa)) the chain is Cytoplasmic.

Its subcellular location is the peroxisome membrane. Its function is as follows. Controls peroxisome morphology and abundance under conditions of peroxisome proliferation such as oleate and methanol media. Has additional function(s), which is not present in its functional homologs such as Saccharomyces cerevisea PEX34 or human PEX16. This chain is Peroxin-36, found in Komagataella phaffii (strain GS115 / ATCC 20864) (Yeast).